Reading from the N-terminus, the 304-residue chain is tRNA pseudouridine synthase A (304 aa).

The active-site Nucleophile is the Asp-65. Residue Tyr-123 coordinates substrate. Residues 274 to 304 (HTGQEKPEARLGNGDLESREERPPHEMSPLH) form a disordered region. The segment covering 289–298 (LESREERPPH) has biased composition (basic and acidic residues).

This sequence belongs to the tRNA pseudouridine synthase TruA family. Homodimer.

The catalysed reaction is uridine(38/39/40) in tRNA = pseudouridine(38/39/40) in tRNA. Its function is as follows. Formation of pseudouridine at positions 38, 39 and 40 in the anticodon stem and loop of transfer RNAs. The protein is tRNA pseudouridine synthase A of Gloeobacter violaceus (strain ATCC 29082 / PCC 7421).